Reading from the N-terminus, the 387-residue chain is Exodeoxyribonuclease 7 large subunit (387 aa).

Belongs to the XseA family. Heterooligomer composed of large and small subunits.

The protein resides in the cytoplasm. The catalysed reaction is Exonucleolytic cleavage in either 5'- to 3'- or 3'- to 5'-direction to yield nucleoside 5'-phosphates.. Functionally, bidirectionally degrades single-stranded DNA into large acid-insoluble oligonucleotides, which are then degraded further into small acid-soluble oligonucleotides. The chain is Exodeoxyribonuclease 7 large subunit from Campylobacter fetus subsp. fetus (strain 82-40).